The primary structure comprises 215 residues: Octanoyltransferase (215 aa).

Residues 35–210 (PDTPDQLWVV…HCLEAIVEYG (176 aa)) enclose the BPL/LPL catalytic domain. Residues 74-81 (RGGQVTYH), 141-143 (SVG), and 154-156 (GLA) each bind substrate. C172 functions as the Acyl-thioester intermediate in the catalytic mechanism.

This sequence belongs to the LipB family.

The protein resides in the cytoplasm. The catalysed reaction is octanoyl-[ACP] + L-lysyl-[protein] = N(6)-octanoyl-L-lysyl-[protein] + holo-[ACP] + H(+). It participates in protein modification; protein lipoylation via endogenous pathway; protein N(6)-(lipoyl)lysine from octanoyl-[acyl-carrier-protein]: step 1/2. In terms of biological role, catalyzes the transfer of endogenously produced octanoic acid from octanoyl-acyl-carrier-protein onto the lipoyl domains of lipoate-dependent enzymes. Lipoyl-ACP can also act as a substrate although octanoyl-ACP is likely to be the physiological substrate. The sequence is that of Octanoyltransferase from Alkalilimnicola ehrlichii (strain ATCC BAA-1101 / DSM 17681 / MLHE-1).